A 155-amino-acid chain; its full sequence is Ribosomal RNA large subunit methyltransferase H (155 aa).

S-adenosyl-L-methionine-binding positions include leucine 72, glycine 103, and 122–127 (LGRMVW).

This sequence belongs to the RNA methyltransferase RlmH family. Homodimer.

Its subcellular location is the cytoplasm. It carries out the reaction pseudouridine(1915) in 23S rRNA + S-adenosyl-L-methionine = N(3)-methylpseudouridine(1915) in 23S rRNA + S-adenosyl-L-homocysteine + H(+). Its function is as follows. Specifically methylates the pseudouridine at position 1915 (m3Psi1915) in 23S rRNA. This is Ribosomal RNA large subunit methyltransferase H from Cereibacter sphaeroides (strain KD131 / KCTC 12085) (Rhodobacter sphaeroides).